The primary structure comprises 158 residues: MSEQNNTEMAFQIQRIYTKDISFEAPNAPQVFQQDWQPEVKLDLDTASSQLAEDVYEVVLRVTVTASLGEETAFLCEVQQGGIFSVAGIEGTQLAHCLGAYCPNILFPYARECITSLVSRGTFPQLNLAPVNFDALFMNYLQQQAEGEVEGVEQRQDA.

The protein belongs to the SecB family. In terms of assembly, homotetramer, a dimer of dimers. One homotetramer interacts with 1 SecA dimer.

Its subcellular location is the cytoplasm. Functionally, one of the proteins required for the normal export of preproteins out of the cell cytoplasm. It is a molecular chaperone that binds to a subset of precursor proteins, maintaining them in a translocation-competent state. It also specifically binds to its receptor SecA. This Yersinia pestis (strain Pestoides F) protein is Protein-export protein SecB.